A 257-amino-acid chain; its full sequence is Glycerol-3-phosphate acyltransferase (257 aa).

Helical transmembrane passes span I7–S27, I66–I86, A104–F124, I140–I160, M164–I184, and Y203–I223.

This sequence belongs to the PlsY family. In terms of assembly, probably interacts with PlsX.

The protein resides in the cell membrane. It catalyses the reaction an acyl phosphate + sn-glycerol 3-phosphate = a 1-acyl-sn-glycero-3-phosphate + phosphate. Its pathway is lipid metabolism; phospholipid metabolism. Functionally, catalyzes the transfer of an acyl group from acyl-phosphate (acyl-PO(4)) to glycerol-3-phosphate (G3P) to form lysophosphatidic acid (LPA). This enzyme utilizes acyl-phosphate as fatty acyl donor, but not acyl-CoA or acyl-ACP. The sequence is that of Glycerol-3-phosphate acyltransferase from Ureaplasma parvum serovar 3 (strain ATCC 700970).